The sequence spans 263 residues: Phosphate import ATP-binding protein PstB (263 aa).

An ABC transporter domain is found at 17–258 (ISVKNLDFFY…PKRKETEDYI (242 aa)). ATP is bound at residue 49–56 (GPSGCGKS).

The protein belongs to the ABC transporter superfamily. Phosphate importer (TC 3.A.1.7) family. The complex is composed of two ATP-binding proteins (PstB), two transmembrane proteins (PstC and PstA) and a solute-binding protein (PstS).

It localises to the cell inner membrane. The enzyme catalyses phosphate(out) + ATP + H2O = ADP + 2 phosphate(in) + H(+). Functionally, part of the ABC transporter complex PstSACB involved in phosphate import. Responsible for energy coupling to the transport system. This is Phosphate import ATP-binding protein PstB from Polaromonas sp. (strain JS666 / ATCC BAA-500).